Reading from the N-terminus, the 851-residue chain is Protein NUD1 (851 aa).

Disordered stretches follow at residues 1–31 and 216–352; these read MDMD…NAHS and LVGS…KAPS. Positions 8–21 are enriched in polar residues; sequence AELSSQLENLTINS. Low complexity-rich tracts occupy residues 223-246 and 260-278; these read NSNN…INNK and SNSF…QTQS. Polar residues predominate over residues 291–304; sequence NTISPGQLGYQFNH. Over residues 320–333 the composition is skewed to low complexity; it reads SSSHSLDNTSSNQS. Lys357 is covalently cross-linked (Glycyl lysine isopeptide (Lys-Gly) (interchain with G-Cter in ubiquitin)). Phosphothreonine occurs at positions 388 and 392. 2 positions are modified to phosphoserine: Ser417 and Ser419. LRR repeat units lie at residues 544–566, 567–588, 589–609, 621–642, and 643–664; these read DLEC…SLCH, HLQE…GSSR, MKKL…EQLI, TVEV…NCLP, and RLKV…SKME.

Interacts directly with MPC54, CNM67, SPO21/MPC70, ADY3 and ADY4. Probable component of a spindle pole boby (SPB) complex composed of ADY3, SSP1, DON1, MPC54, SPO21/MPC70, NUD1 and CNM67. Post-translationally, phosphorylated from S/G2 phase until the end of mitosis.

It is found in the cytoplasm. It localises to the cytoskeleton. The protein resides in the microtubule organizing center. Its subcellular location is the spindle pole body. The protein localises to the nucleus envelope. Its function is as follows. Involved in astral microtubule organization by binding SCP72 to the outer plaque in a cell-cycle dependent manner. Required for the mitotic exit by facilitating the binding of TEMP1 to CDC15. Also involved in the pathway that organizes the shaping and sizing of the prospore membrane (PSM) during sporulation. In Saccharomyces cerevisiae (strain ATCC 204508 / S288c) (Baker's yeast), this protein is Protein NUD1 (NUD1).